A 297-amino-acid polypeptide reads, in one-letter code: UPF0761 membrane protein VC0395_A2314/VC395_2854 (297 aa).

The next 6 membrane-spanning stretches (helical) occupy residues 43 to 63, 100 to 120, 135 to 155, 181 to 201, 213 to 233, and 245 to 265; these read LLSM…FALF, MTAV…SNID, AVFS…LVGA, FLRW…YLLV, LGAL…AAYI, and ALAA…IVLV.

Belongs to the UPF0761 family.

The protein localises to the cell inner membrane. The protein is UPF0761 membrane protein VC0395_A2314/VC395_2854 of Vibrio cholerae serotype O1 (strain ATCC 39541 / Classical Ogawa 395 / O395).